Reading from the N-terminus, the 119-residue chain is Small ribosomal subunit protein uS13 (119 aa).

Positions 92–119 (RRGLPVRGQQTQTNARTRKGPRRGPASR) are disordered.

Belongs to the universal ribosomal protein uS13 family. In terms of assembly, part of the 30S ribosomal subunit. Forms a loose heterodimer with protein S19. Forms two bridges to the 50S subunit in the 70S ribosome.

Located at the top of the head of the 30S subunit, it contacts several helices of the 16S rRNA. In the 70S ribosome it contacts the 23S rRNA (bridge B1a) and protein L5 of the 50S subunit (bridge B1b), connecting the 2 subunits; these bridges are implicated in subunit movement. Contacts the tRNAs in the A and P-sites. The polypeptide is Small ribosomal subunit protein uS13 (Halorhodospira halophila (strain DSM 244 / SL1) (Ectothiorhodospira halophila (strain DSM 244 / SL1))).